The primary structure comprises 123 residues: Protein Wnt-7a (123 aa).

The O-palmitoleoyl serine; by PORCN moiety is linked to residue Ser1. A disordered linker region spans residues 33–61; the sequence is VEPVRASRNKRPTFLKIKKPLSYRKPMDT. Cysteines 89 and 104 form a disulfide. Asn90 carries an N-linked (GlcNAc...) asparagine glycan.

Belongs to the Wnt family. As to quaternary structure, forms a soluble 1:1 complex with AFM; this prevents oligomerization and is required for prolonged biological activity. The complex with AFM may represent the physiological form in body fluids. Interacts with FZD5. Interacts with PORCN. Post-translationally, palmitoleoylation is required for efficient binding to frizzled receptors. Depalmitoleoylation leads to Wnt signaling pathway inhibition.

The protein localises to the secreted. The protein resides in the extracellular space. It localises to the extracellular matrix. Functionally, ligand for members of the frizzled family of seven transmembrane receptors that functions in the canonical Wnt/beta-catenin signaling pathway. Plays an important role in embryonic development, including dorsal versus ventral patterning during limb development, skeleton development and urogenital tract development. Required for central nervous system (CNS) angiogenesis and blood-brain barrier regulation. The sequence is that of Protein Wnt-7a (WNT7A) from Meleagris gallopavo (Wild turkey).